A 660-amino-acid polypeptide reads, in one-letter code: Probable Xaa-Pro aminopeptidase PTRG_10574 (660 aa).

D274, D285, E435, and E476 together coordinate Mn(2+). The segment at 641–660 (SAGSGSTPLWKPHNKQDKKN) is disordered.

This sequence belongs to the peptidase M24B family. Requires Mn(2+) as cofactor.

It catalyses the reaction Release of any N-terminal amino acid, including proline, that is linked to proline, even from a dipeptide or tripeptide.. Functionally, catalyzes the removal of a penultimate prolyl residue from the N-termini of peptides. In Pyrenophora tritici-repentis (strain Pt-1C-BFP) (Wheat tan spot fungus), this protein is Probable Xaa-Pro aminopeptidase PTRG_10574.